We begin with the raw amino-acid sequence, 227 residues long: Cytochrome c oxidase subunit 2 (227 aa).

The Mitochondrial intermembrane segment spans residues 1 to 22 (MAYPFQLGLQDATSPIMEELMN). A helical transmembrane segment spans residues 23–44 (FHDHTLMIVFLISSLVLYIISL). At 45–60 (MLTTKLTHTSTMDAQE) the chain is on the mitochondrial matrix side. A helical membrane pass occupies residues 61 to 81 (VETIWTILPAVILIMIALPSL). Topologically, residues 82 to 227 (RILYMMDEIN…YFENWSASMI (146 aa)) are mitochondrial intermembrane. Cu cation is bound by residues His-161, Cys-196, Glu-198, Cys-200, His-204, and Met-207. Glu-198 lines the Mg(2+) pocket. Tyr-218 carries the post-translational modification Phosphotyrosine.

This sequence belongs to the cytochrome c oxidase subunit 2 family. Component of the cytochrome c oxidase (complex IV, CIV), a multisubunit enzyme composed of 14 subunits. The complex is composed of a catalytic core of 3 subunits MT-CO1, MT-CO2 and MT-CO3, encoded in the mitochondrial DNA, and 11 supernumerary subunits COX4I, COX5A, COX5B, COX6A, COX6B, COX6C, COX7A, COX7B, COX7C, COX8 and NDUFA4, which are encoded in the nuclear genome. The complex exists as a monomer or a dimer and forms supercomplexes (SCs) in the inner mitochondrial membrane with NADH-ubiquinone oxidoreductase (complex I, CI) and ubiquinol-cytochrome c oxidoreductase (cytochrome b-c1 complex, complex III, CIII), resulting in different assemblies (supercomplex SCI(1)III(2)IV(1) and megacomplex MCI(2)III(2)IV(2)). Found in a complex with TMEM177, COA6, COX18, COX20, SCO1 and SCO2. Interacts with TMEM177 in a COX20-dependent manner. Interacts with COX20. Interacts with COX16. It depends on Cu cation as a cofactor.

The protein localises to the mitochondrion inner membrane. It catalyses the reaction 4 Fe(II)-[cytochrome c] + O2 + 8 H(+)(in) = 4 Fe(III)-[cytochrome c] + 2 H2O + 4 H(+)(out). Its function is as follows. Component of the cytochrome c oxidase, the last enzyme in the mitochondrial electron transport chain which drives oxidative phosphorylation. The respiratory chain contains 3 multisubunit complexes succinate dehydrogenase (complex II, CII), ubiquinol-cytochrome c oxidoreductase (cytochrome b-c1 complex, complex III, CIII) and cytochrome c oxidase (complex IV, CIV), that cooperate to transfer electrons derived from NADH and succinate to molecular oxygen, creating an electrochemical gradient over the inner membrane that drives transmembrane transport and the ATP synthase. Cytochrome c oxidase is the component of the respiratory chain that catalyzes the reduction of oxygen to water. Electrons originating from reduced cytochrome c in the intermembrane space (IMS) are transferred via the dinuclear copper A center (CU(A)) of subunit 2 and heme A of subunit 1 to the active site in subunit 1, a binuclear center (BNC) formed by heme A3 and copper B (CU(B)). The BNC reduces molecular oxygen to 2 water molecules using 4 electrons from cytochrome c in the IMS and 4 protons from the mitochondrial matrix. This is Cytochrome c oxidase subunit 2 (Mtco2) from Mus musculus (Mouse).